The following is a 279-amino-acid chain: Protein PHOTOPERIODIC CONTROL OF HYPOCOTYL 1-LIKE (279 aa).

Interacts with light-activated phyB. Binds directly to PIF1 and COP1. Ubiquitinated by COP1 in darkness; this leads to proteasomal degradation. In terms of tissue distribution, mainly expressed in cotyledons, hypocotyls, leaves.

The protein resides in the nucleus. Functionally, together with PCH1, regulates growth and development adaptation to the ambient environment by controlling negatively phytochrome B (phyB) dark reversion, a temperature-dependent thermal relaxation process during which phyB reverts from the active to the inactive state. Contributes to red (R) light-triggered photomorphogenesis. Promotes various light responses such as seed germination, hypocotyl gravitropism and chlorophyll biosynthesis, via direct interaction with PIF1 and COP1. Prevents DNA-binding ability of PIF1 to negatively regulate the expressions of its target genes. Facilitates the physical interaction between phyB and PIF1 and the subsequent light-induced degradation of PIF1. In Arabidopsis thaliana (Mouse-ear cress), this protein is Protein PHOTOPERIODIC CONTROL OF HYPOCOTYL 1-LIKE.